Here is a 441-residue protein sequence, read N- to C-terminus: Keratin, type I cytoskeletal 17 (441 aa).

A disordered region spans residues 1–23; sequence MTTTIRHFSSGSIKGSSGLAGGS. The tract at residues 1 to 91 is head; sequence MTTTIRHFSS…GGVDGLLVGG (91 aa). Low complexity predominate over residues 9–23; sequence SSGSIKGSSGLAGGS. Ser12 is modified (phosphoserine). Lys14 participates in a covalent cross-link: Glycyl lysine isopeptide (Lys-Gly) (interchain with G-Cter in SUMO1); alternate. Lys14 participates in a covalent cross-link: Glycyl lysine isopeptide (Lys-Gly) (interchain with G-Cter in SUMO2); alternate. Residues Ser24, Ser30, Ser32, and Ser37 each carry the phosphoserine modification. Ser42 carries the phosphoserine; by RPS6KA1 modification. Positions 92-128 are coil 1A; sequence EKATMQNLNDRLASYLDKVRALEEANTELELKIRDWY. Residues 92 to 403 enclose the IF rod domain; sequence EKATMQNLND…RLLEGEDAHL (312 aa). The residue at position 118 (Thr118) is a Phosphothreonine. The linker 1 stretch occupies residues 129-146; sequence QKQAPGPAPDYSSYFKTI. Positions 147-238 are coil 1B; it reads EDLRNKIHTA…NHEEEMKALR (92 aa). The interval 239–258 is linker 12; the sequence is GQVGGEINVEMDAAPGVDLS. Positions 259–400 are coil 2; the sequence is RILNEMRDQY…TYRRLLEGED (142 aa). Lys286 is covalently cross-linked (Glycyl lysine isopeptide (Lys-Gly) (interchain with G-Cter in SUMO2)). Phosphothreonine is present on Thr287. Phosphoserine is present on Ser331. Positions 401-441 are tail; that stretch reads AHLTQYKTKEPVTTRQVRTIVEEVQDGRVISSREQVHQTSH. Glycyl lysine isopeptide (Lys-Gly) (interchain with G-Cter in SUMO1); alternate cross-links involve residues Lys407 and Lys409. Residues Lys407 and Lys409 each participate in a glycyl lysine isopeptide (Lys-Gly) (interchain with G-Cter in SUMO2); alternate cross-link.

This sequence belongs to the intermediate filament family. As to quaternary structure, heterodimer of a type I and a type II keratin. KRT17 associates with KRT6 isomers (KRT6A or KRT6B). Interacts with TRADD and SFN. Post-translationally, phosphorylation at Ser-42 occurs in a growth- and stress-dependent fashion in skin keratinocytes, it has no effect on filament organization.

Its subcellular location is the cytoplasm. In terms of biological role, type I keratin involved in the formation and maintenance of various skin appendages, specifically in determining shape and orientation of hair. Required for the correct growth of hair follicles, in particular for the persistence of the anagen (growth) state. Modulates the function of TNF-alpha in the specific context of hair cycling. Regulates protein synthesis and epithelial cell growth through binding to the adapter protein SFN and by stimulating Akt/mTOR pathway. Involved in tissue repair. May be a marker of basal cell differentiation in complex epithelia and therefore indicative of a certain type of epithelial 'stem cells'. Acts as a promoter of epithelial proliferation by acting a regulator of immune response in skin: promotes Th1/Th17-dominated immune environment contributing to the development of basaloid skin tumors. May act as an autoantigen in the immunopathogenesis of psoriasis, with certain peptide regions being a major target for autoreactive T-cells and hence causing their proliferation. This chain is Keratin, type I cytoskeletal 17, found in Bos taurus (Bovine).